A 798-amino-acid polypeptide reads, in one-letter code: Type 2 DNA topoisomerase 6 subunit B (798 aa).

ATP is bound by residues asparagine 60, aspartate 91, 112–113, and 122–129; these read SR and GQQGIGIS. The span at 221–233 shows a compositional bias: basic and acidic residues; sequence EPEDSFKSERATE. The tract at residues 221-245 is disordered; the sequence is EPEDSFKSERATEELPPETEEIRPH. Residue lysine 629 coordinates ATP.

This sequence belongs to the TOP6B family. In terms of assembly, homodimer. Heterotetramer of two Top6A and two Top6B chains.

The enzyme catalyses ATP-dependent breakage, passage and rejoining of double-stranded DNA.. Relaxes both positive and negative superturns and exhibits a strong decatenase activity. The protein is Type 2 DNA topoisomerase 6 subunit B of Natronomonas pharaonis (strain ATCC 35678 / DSM 2160 / CIP 103997 / JCM 8858 / NBRC 14720 / NCIMB 2260 / Gabara) (Halobacterium pharaonis).